The chain runs to 953 residues: ALS2 C-terminal-like protein (953 aa).

8 MORN repeats span residues 358–380 (YEGE…DGRN), 381–403 (HVGD…QASE), 409–431 (YKCH…TSEV), 432–454 (YKGY…PQAP), 459–481 (YTGH…DRGE), 483–505 (YIGM…AGVC), 506–528 (YQGT…DDSL), and 529–552 (YEGT…NGFT). In terms of domain architecture, VPS9 spans 796–942 (LFPDARLLEF…IQKEDMRLHR (147 aa)).

In terms of assembly, homodimer. Forms a heteromeric complex with ALS2. Interacts with ALS2 and RAB5A.

It localises to the cytoplasm. Its function is as follows. Acts as a guanine nucleotide exchange factor (GEF) for Rab5 GTPase. Regulates the ALS2-mediated endosome dynamics. The sequence is that of ALS2 C-terminal-like protein (ALS2CL) from Bos taurus (Bovine).